Here is an 87-residue protein sequence, read N- to C-terminus: Down syndrome critical region protein 10 (87 aa).

This Pan troglodytes (Chimpanzee) protein is Down syndrome critical region protein 10 (DSCR10).